The sequence spans 115 residues: Peptidyl-tRNA hydrolase (115 aa).

It belongs to the PTH2 family.

The protein localises to the cytoplasm. The catalysed reaction is an N-acyl-L-alpha-aminoacyl-tRNA + H2O = an N-acyl-L-amino acid + a tRNA + H(+). Functionally, the natural substrate for this enzyme may be peptidyl-tRNAs which drop off the ribosome during protein synthesis. In Methanosarcina acetivorans (strain ATCC 35395 / DSM 2834 / JCM 12185 / C2A), this protein is Peptidyl-tRNA hydrolase.